The chain runs to 774 residues: Polyribonucleotide nucleotidyltransferase (774 aa).

Mg(2+) is bound by residues Asp485 and Asp491. Residues 552–611 (PRIETMSVPKDKIRDIIGTGGKIIREIVATTGAKVDIDDDGTVKISSSDTAQIEAARNWI) form the KH domain. The region spanning 621 to 689 (GKIYTGKVVN…NRGKVRLSMR (69 aa)) is the S1 motif domain. The disordered stretch occupies residues 689–774 (RVVDQETGEE…APAFLTRDDD (86 aa)). Residues 700–755 (PDTRPPREERPRGDRGDRGDRGPRRDGDRRREGGDRGPRRDRGDRGDRPRRERSEG) are compositionally biased toward basic and acidic residues.

It belongs to the polyribonucleotide nucleotidyltransferase family. It depends on Mg(2+) as a cofactor.

Its subcellular location is the cytoplasm. The enzyme catalyses RNA(n+1) + phosphate = RNA(n) + a ribonucleoside 5'-diphosphate. Involved in mRNA degradation. Catalyzes the phosphorolysis of single-stranded polyribonucleotides processively in the 3'- to 5'-direction. The protein is Polyribonucleotide nucleotidyltransferase of Rhizorhabdus wittichii (strain DSM 6014 / CCUG 31198 / JCM 15750 / NBRC 105917 / EY 4224 / RW1) (Sphingomonas wittichii).